The sequence spans 1465 residues: DNA polymerase III PolC-type (1465 aa).

An Exonuclease domain is found at 427-583 (YVVFDVETTG…YDAEATGRLL (157 aa)).

This sequence belongs to the DNA polymerase type-C family. PolC subfamily.

Its subcellular location is the cytoplasm. It carries out the reaction DNA(n) + a 2'-deoxyribonucleoside 5'-triphosphate = DNA(n+1) + diphosphate. Its function is as follows. Required for replicative DNA synthesis. This DNA polymerase also exhibits 3' to 5' exonuclease activity. The protein is DNA polymerase III PolC-type of Streptococcus pyogenes serotype M18 (strain MGAS8232).